The following is a 229-amino-acid chain: DNA repair protein RecO (229 aa).

Belongs to the RecO family.

In terms of biological role, involved in DNA repair and RecF pathway recombination. The protein is DNA repair protein RecO of Legionella pneumophila subsp. pneumophila (strain Philadelphia 1 / ATCC 33152 / DSM 7513).